Consider the following 421-residue polypeptide: Polygalacturonase (421 aa).

A signal peptide spans 1–20 (MKFSTAIIVSFLFIADFCAA). Residues Asn-156 and Asn-180 are each glycosylated (N-linked (GlcNAc...) asparagine). PbH1 repeat units follow at residues 178-204 (CKNI…HMGK) and 205-226 (STDV…SIGD). Asp-219 serves as the catalytic Proton donor. Residue His-242 is part of the active site. PbH1 repeat units lie at residues 258–279 (VEGI…RIKT) and 289–310 (VSDI…IIDQ). N-linked (GlcNAc...) asparagine glycosylation occurs at Asn-265. A disordered region spans residues 394–421 (PGAPAASTTATPAASKTATPAAGKSPAK).

The protein belongs to the glycosyl hydrolase 28 family. As to expression, pollen specific.

The protein localises to the secreted. Its subcellular location is the cell wall. It carries out the reaction (1,4-alpha-D-galacturonosyl)n+m + H2O = (1,4-alpha-D-galacturonosyl)n + (1,4-alpha-D-galacturonosyl)m.. Its function is as follows. May function in the depolymerization of the pectin in its walls during pollen tube elongation, or in that of the pistil during pollination. This is Polygalacturonase from Medicago sativa (Alfalfa).